The sequence spans 54 residues: Ribulose bisphosphate carboxylase large chain (54 aa).

Residues 1-2 (MS) constitute a propeptide that is removed on maturation. Proline 3 bears the N-acetylproline mark. Lysine 14 bears the N6,N6,N6-trimethyllysine mark.

This sequence belongs to the RuBisCO large chain family. Type I subfamily. Heterohexadecamer of 8 large chains and 8 small chains.

It is found in the plastid. The protein localises to the chloroplast. It catalyses the reaction 2 (2R)-3-phosphoglycerate + 2 H(+) = D-ribulose 1,5-bisphosphate + CO2 + H2O. It carries out the reaction D-ribulose 1,5-bisphosphate + O2 = 2-phosphoglycolate + (2R)-3-phosphoglycerate + 2 H(+). Its function is as follows. RuBisCO catalyzes two reactions: the carboxylation of D-ribulose 1,5-bisphosphate, the primary event in carbon dioxide fixation, as well as the oxidative fragmentation of the pentose substrate in the photorespiration process. Both reactions occur simultaneously and in competition at the same active site. This Geum borisii (Avens) protein is Ribulose bisphosphate carboxylase large chain (rbcL).